We begin with the raw amino-acid sequence, 733 residues long: Catalase-peroxidase (733 aa).

A disordered region spans residues 1-24 (MTDDSTCPVTGGADKQVTGRGQSY). The segment at residues 96–219 (WHSAGTYRTL…LAAVQMGLIY (124 aa)) is a cross-link (tryptophyl-tyrosyl-methioninium (Trp-Tyr) (with M-245)). His-97 (proton acceptor) is an active-site residue. The segment at residues 219–245 (YVNPEGPNGKPDPVAAAKDIRETFARM) is a cross-link (tryptophyl-tyrosyl-methioninium (Tyr-Met) (with W-96)). His-260 is a heme b binding site.

The protein belongs to the peroxidase family. Peroxidase/catalase subfamily. In terms of assembly, homodimer or homotetramer. Requires heme b as cofactor. Post-translationally, formation of the three residue Trp-Tyr-Met cross-link is important for the catalase, but not the peroxidase activity of the enzyme.

The enzyme catalyses H2O2 + AH2 = A + 2 H2O. The catalysed reaction is 2 H2O2 = O2 + 2 H2O. Its function is as follows. Bifunctional enzyme with both catalase and broad-spectrum peroxidase activity. This chain is Catalase-peroxidase, found in Methanoregula boonei (strain DSM 21154 / JCM 14090 / 6A8).